The primary structure comprises 292 residues: Proteasome subunit beta (292 aa).

The propeptide at 1–62 is removed in mature form; by autocatalysis; it reads MSESLGSVPG…HRAADDIPHG (62 aa). Thr-63 acts as the Nucleophile in catalysis.

It belongs to the peptidase T1B family. The 20S proteasome core is composed of 14 alpha and 14 beta subunits that assemble into four stacked heptameric rings, resulting in a barrel-shaped structure. The two inner rings, each composed of seven catalytic beta subunits, are sandwiched by two outer rings, each composed of seven alpha subunits. The catalytic chamber with the active sites is on the inside of the barrel. Has a gated structure, the ends of the cylinder being occluded by the N-termini of the alpha-subunits. Is capped by the proteasome-associated ATPase, ARC.

The protein resides in the cytoplasm. The catalysed reaction is Cleavage of peptide bonds with very broad specificity.. It participates in protein degradation; proteasomal Pup-dependent pathway. Its activity is regulated as follows. The formation of the proteasomal ATPase ARC-20S proteasome complex, likely via the docking of the C-termini of ARC into the intersubunit pockets in the alpha-rings, may trigger opening of the gate for substrate entry. Interconversion between the open-gate and close-gate conformations leads to a dynamic regulation of the 20S proteasome proteolysis activity. In terms of biological role, component of the proteasome core, a large protease complex with broad specificity involved in protein degradation. This Gordonia bronchialis (strain ATCC 25592 / DSM 43247 / BCRC 13721 / JCM 3198 / KCTC 3076 / NBRC 16047 / NCTC 10667) (Rhodococcus bronchialis) protein is Proteasome subunit beta.